Consider the following 52-residue polypeptide: Creatine kinase B-type (52 aa).

Residues 1–52 (AKVLTLDLYKKLRDKSTPSGFTLDDIIQNEHLGYVLTCPSNLGTXLRAXVHV) form the Phosphagen kinase C-terminal domain. The region spanning 1–52 (AKVLTLDLYKKLRDKSTPSGFTLDDIIQNEHLGYVLTCPSNLGTXLRAXVHV) is the Phosphagen kinase N-terminal domain. Residues R13 and R47 each contribute to the ATP site.

The protein belongs to the ATP:guanido phosphotransferase family. In terms of assembly, dimer of identical or non-identical chains, which can be either B (brain type) or M (muscle type). With MM being the major form in skeletal muscle and myocardium, MB existing in myocardium, and BB existing in many tissues, especially brain. As to expression, expressed in rectal gland, brain, skeletal muscle (at protein level).

It localises to the cytoplasm. The protein localises to the cytosol. It is found in the mitochondrion. Its subcellular location is the basal cell membrane. The catalysed reaction is creatine + ATP = N-phosphocreatine + ADP + H(+). In terms of biological role, reversibly catalyzes the transfer of phosphate between ATP and various phosphogens (e.g. creatine phosphate). Creatine kinase isoenzymes play a central role in energy transduction in tissues with large, fluctuating energy demands, such as skeletal muscle, heart, brain and spermatozoa. The sequence is that of Creatine kinase B-type from Squalus acanthias (Spiny dogfish).